Consider the following 404-residue polypeptide: Nesprin-4 (404 aa).

Disordered regions lie at residues 1–91 (MALS…GGKH) and 277–347 (GQRG…GAPD). The Cytoplasmic segment spans residues 1 to 355 (MALSLPLGPR…PDPASRQPLT (355 aa)). Residues 39–52 (EESTSPEQAQTLGQ) show a composition bias toward polar residues. The span at 307–320 (HQKRLARHQRHSLL) shows a compositional bias: basic residues. One can recognise a KASH domain in the interval 347–404 (DPASRQPLTFLLILFLLFLLLVGAMFLLPASGGPCCSHARIPRTPYLVLSYVNGLPPV). The chain crosses the membrane as a helical; Anchor for type IV membrane protein span at residues 356–376 (FLLILFLLFLLLVGAMFLLPA). At 377–404 (SGGPCCSHARIPRTPYLVLSYVNGLPPV) the chain is on the perinuclear space side.

The protein belongs to the nesprin family. As to quaternary structure, core component of LINC complexes which are composed of inner nuclear membrane SUN domain-containing proteins coupled to outer nuclear membrane KASH domain-containing nesprins. SUN and KASH domain-containing proteins seem to bind each other promiscuously; however, differentially expression of LINC complex constituents can give rise to specific assemblies. Probably part of a SUN1-containing LINC complex. Interacts with kinesins KIF5B and KLC1. The disulfid bond with SUN1 or SUN2 is required for stability of the respective LINC complex under tensile forces.

The protein localises to the nucleus outer membrane. Functionally, as a component of the LINC (LInker of Nucleoskeleton and Cytoskeleton) complex, involved in the connection between the nuclear lamina and the cytoskeleton. The nucleocytoplasmic interactions established by the LINC complex play an important role in the transmission of mechanical forces across the nuclear envelope and in nuclear movement and positioning. Behaves as a kinesin cargo, providing a functional binding site for kinesin-1 at the nuclear envelope. Hence may contribute to the establishment of secretory epithelial morphology by promoting kinesin-dependent apical migration of the centrosome and Golgi apparatus and basal localization of the nucleus. This Homo sapiens (Human) protein is Nesprin-4 (SYNE4).